The chain runs to 365 residues: Cobalt-precorrin-5B C(1)-methyltransferase (365 aa).

The protein belongs to the CbiD family.

It catalyses the reaction Co-precorrin-5B + S-adenosyl-L-methionine = Co-precorrin-6A + S-adenosyl-L-homocysteine. Its pathway is cofactor biosynthesis; adenosylcobalamin biosynthesis; cob(II)yrinate a,c-diamide from sirohydrochlorin (anaerobic route): step 6/10. Catalyzes the methylation of C-1 in cobalt-precorrin-5B to form cobalt-precorrin-6A. This chain is Cobalt-precorrin-5B C(1)-methyltransferase, found in Variovorax paradoxus (strain S110).